The primary structure comprises 503 residues: Probable cytosol aminopeptidase (503 aa).

The Mn(2+) site is built by lysine 270 and aspartate 275. Lysine 282 is an active-site residue. Aspartate 293, aspartate 352, and glutamate 354 together coordinate Mn(2+). Arginine 356 is a catalytic residue.

Belongs to the peptidase M17 family. Mn(2+) is required as a cofactor.

It localises to the cytoplasm. The catalysed reaction is Release of an N-terminal amino acid, Xaa-|-Yaa-, in which Xaa is preferably Leu, but may be other amino acids including Pro although not Arg or Lys, and Yaa may be Pro. Amino acid amides and methyl esters are also readily hydrolyzed, but rates on arylamides are exceedingly low.. It carries out the reaction Release of an N-terminal amino acid, preferentially leucine, but not glutamic or aspartic acids.. Functionally, presumably involved in the processing and regular turnover of intracellular proteins. Catalyzes the removal of unsubstituted N-terminal amino acids from various peptides. This chain is Probable cytosol aminopeptidase, found in Pectobacterium atrosepticum (strain SCRI 1043 / ATCC BAA-672) (Erwinia carotovora subsp. atroseptica).